A 186-amino-acid chain; its full sequence is UPF0200 protein Mbar_A0975 (186 aa).

8-15 provides a ligand contact to ATP; sequence GMPASGKS.

Belongs to the UPF0200 family.

The chain is UPF0200 protein Mbar_A0975 from Methanosarcina barkeri (strain Fusaro / DSM 804).